We begin with the raw amino-acid sequence, 108 residues long: UPF0060 membrane protein Mflv_3127 (108 aa).

4 consecutive transmembrane segments (helical) span residues 7–27 (LLFVLAAVLEIGGAWLVWQGF), 32–52 (GWLWVGAGVLALGAYGFVAAF), 61–81 (VLAAYGGVFVAGSLIWGMVAD), and 87–107 (RWDITGAAVCLLGVVLIMYAP).

This sequence belongs to the UPF0060 family.

The protein resides in the cell membrane. The polypeptide is UPF0060 membrane protein Mflv_3127 (Mycolicibacterium gilvum (strain PYR-GCK) (Mycobacterium gilvum (strain PYR-GCK))).